Consider the following 305-residue polypeptide: UDP-3-O-acyl-N-acetylglucosamine deacetylase (305 aa).

Zn(2+)-binding residues include His-79, His-238, and Asp-242. His-265 serves as the catalytic Proton donor.

It belongs to the LpxC family. It depends on Zn(2+) as a cofactor.

The catalysed reaction is a UDP-3-O-[(3R)-3-hydroxyacyl]-N-acetyl-alpha-D-glucosamine + H2O = a UDP-3-O-[(3R)-3-hydroxyacyl]-alpha-D-glucosamine + acetate. It functions in the pathway glycolipid biosynthesis; lipid IV(A) biosynthesis; lipid IV(A) from (3R)-3-hydroxytetradecanoyl-[acyl-carrier-protein] and UDP-N-acetyl-alpha-D-glucosamine: step 2/6. Catalyzes the hydrolysis of UDP-3-O-myristoyl-N-acetylglucosamine to form UDP-3-O-myristoylglucosamine and acetate, the committed step in lipid A biosynthesis. The sequence is that of UDP-3-O-acyl-N-acetylglucosamine deacetylase from Pectobacterium atrosepticum (strain SCRI 1043 / ATCC BAA-672) (Erwinia carotovora subsp. atroseptica).